Here is a 346-residue protein sequence, read N- to C-terminus: Histidinol-phosphate aminotransferase (346 aa).

Lys-209 is subject to N6-(pyridoxal phosphate)lysine.

It belongs to the class-II pyridoxal-phosphate-dependent aminotransferase family. Histidinol-phosphate aminotransferase subfamily. Homodimer. Pyridoxal 5'-phosphate is required as a cofactor.

The enzyme catalyses L-histidinol phosphate + 2-oxoglutarate = 3-(imidazol-4-yl)-2-oxopropyl phosphate + L-glutamate. It participates in amino-acid biosynthesis; L-histidine biosynthesis; L-histidine from 5-phospho-alpha-D-ribose 1-diphosphate: step 7/9. This chain is Histidinol-phosphate aminotransferase, found in Vibrio cholerae serotype O1 (strain ATCC 39315 / El Tor Inaba N16961).